The primary structure comprises 113 residues: Regulator of rDNA transcription protein 7 (113 aa).

2 helical membrane passes run 13 to 35 (FLPIASFLTILNRILFQYWLFYN) and 70 to 92 (FLLGFMVQLQSCVKLLPLYLLFL).

Its subcellular location is the membrane. Functionally, identified in a screen for mutants with decreased levels of rDNA transcription. This is Regulator of rDNA transcription protein 7 (RRT7) from Saccharomyces cerevisiae (strain ATCC 204508 / S288c) (Baker's yeast).